The sequence spans 374 residues: Arrestin domain-containing protein 15 (374 aa).

The tract at residues 344 to 374 (HHLNRSKAKVSKTEQQQRKTRNIVEENPYFR) is disordered.

It belongs to the arrestin family.

This chain is Arrestin domain-containing protein 15 (arrd-15), found in Caenorhabditis elegans.